A 351-amino-acid chain; its full sequence is Apolipoprotein L4 (351 aa).

The first 21 residues, 1-21 (MEGAALLKIFVVCIWVQQNHP), serve as a signal peptide directing secretion.

This sequence belongs to the apolipoprotein L family. In terms of tissue distribution, widely expressed; the highest levels are in spinal cord, placenta, adrenal gland; also detected in spleen, bone marrow, uterus, trachea, mammary gland and testis; levels are low in brain, heart and pancreas.

The protein resides in the secreted. In terms of biological role, may play a role in lipid exchange and transport throughout the body. May participate in reverse cholesterol transport from peripheral cells to the liver. The polypeptide is Apolipoprotein L4 (APOL4) (Homo sapiens (Human)).